The chain runs to 615 residues: Zinc metalloproteinase-disintegrin-like (615 aa).

Positions 1–20 (MIQALLVTICLVGFPHQGSS) are cleaved as a signal peptide. Residues 21–195 (IILESGNVKD…KMNFQSANNP (175 aa)) constitute a propeptide that is removed on maturation. The Peptidase M12B domain maps to 204–400 (KYIKLAVVVD…DLPQCILNKP (197 aa)). Cystine bridges form between Cys315–Cys395, Cys355–Cys379, and Cys357–Cys362. His340 provides a ligand contact to Zn(2+). Residue Glu341 is part of the active site. Residues His344 and His350 each coordinate Zn(2+). The Disintegrin domain maps to 408–494 (PAVCGNNFVE…DCPMDGLQRN (87 aa)). The Ca(2+) site is built by Val410, Asn413, Phe415, Glu417, and Asp423. 14 disulfides stabilise this stretch: Cys411–Cys440, Cys422–Cys435, Cys424–Cys430, Cys434–Cys457, Cys448–Cys454, Cys453–Cys479, Cys466–Cys486, Cys473–Cys505, Cys498–Cys510, Cys517–Cys567, Cys532–Cys576, Cys545–Cys555, Cys562–Cys602, and Cys596–Cys608. The short motif at 472–474 (DCD) is the D/ECD-tripeptide element.

This sequence belongs to the venom metalloproteinase (M12B) family. P-III subfamily. P-IIIa sub-subfamily. In terms of assembly, monomer. Zn(2+) serves as cofactor. In terms of tissue distribution, expressed by the venom gland.

Its subcellular location is the secreted. Functionally, snake venom zinc metalloprotease that may induce platelet aggregation. In Cerberus rynchops (Dog-faced water snake), this protein is Zinc metalloproteinase-disintegrin-like.